Reading from the N-terminus, the 71-residue chain is Large ribosomal subunit protein bL31 (71 aa).

Zn(2+) is bound by residues C16, C18, C37, and C40.

It belongs to the bacterial ribosomal protein bL31 family. Type A subfamily. Part of the 50S ribosomal subunit. Zn(2+) is required as a cofactor.

In terms of biological role, binds the 23S rRNA. In Pseudoalteromonas atlantica (strain T6c / ATCC BAA-1087), this protein is Large ribosomal subunit protein bL31.